Reading from the N-terminus, the 180-residue chain is Small ribosomal subunit protein uS5 (180 aa).

Positions 13–76 (LEERVVQINR…EAAKKNLIRV (64 aa)) constitute an S5 DRBM domain.

This sequence belongs to the universal ribosomal protein uS5 family. As to quaternary structure, part of the 30S ribosomal subunit. Contacts proteins S4 and S8.

Its function is as follows. With S4 and S12 plays an important role in translational accuracy. Functionally, located at the back of the 30S subunit body where it stabilizes the conformation of the head with respect to the body. The sequence is that of Small ribosomal subunit protein uS5 from Roseiflexus sp. (strain RS-1).